The chain runs to 899 residues: Calcium-transporting ATPase 1 (899 aa).

A run of 4 helical transmembrane segments spans residues 59–79 (FVKD…VTLG), 80–100 (NIDD…VGFV), 247–267 (QLSL…FFQG), and 282–302 (VAAI…LGVL). The 4-aspartylphosphate intermediate role is filled by Asp-329. 4 consecutive transmembrane segments (helical) span residues 688 to 708 (FQLS…VFGF), 757 to 777 (QLLQ…IVVF), 827 to 847 (FNIA…ASPF), and 854 to 874 (EAIG…VLWV). Position 892 is a phosphoserine (Ser-892).

It belongs to the cation transport ATPase (P-type) (TC 3.A.3) family.

It localises to the endoplasmic reticulum membrane. It carries out the reaction Ca(2+)(in) + ATP + H2O = Ca(2+)(out) + ADP + phosphate + H(+). Functionally, transports calcium and manganese ions into the cell. Regulates cell morphogenesis through control of manganese and calcium homeostasis. The sequence is that of Calcium-transporting ATPase 1 (pmr1) from Schizosaccharomyces pombe (strain 972 / ATCC 24843) (Fission yeast).